The chain runs to 374 residues: Agmatine deiminase (374 aa).

Asp220 and Asp226 together coordinate agmatine. The active-site Amidino-cysteine intermediate is Cys366.

The protein belongs to the agmatine deiminase family. As to quaternary structure, forms homodimers.

It catalyses the reaction agmatine + H2O = N-carbamoylputrescine + NH4(+). Its pathway is amine and polyamine biosynthesis; putrescine biosynthesis via agmatine pathway; N-carbamoylputrescine from agmatine: step 1/1. In terms of biological role, mediates the hydrolysis of agmatine into N-carbamoylputrescine in the arginine decarboxylase (ADC) pathway of putrescine biosynthesis, a basic polyamine. The sequence is that of Agmatine deiminase from Medicago truncatula (Barrel medic).